We begin with the raw amino-acid sequence, 232 residues long: Flagellar L-ring protein (232 aa).

A signal peptide spans 1–15; that stretch reads MKKVLFYVLPFAFFG. Residue Cys-16 is the site of N-palmitoyl cysteine attachment. Residue Cys-16 is the site of S-diacylglycerol cysteine attachment.

Belongs to the FlgH family. As to quaternary structure, the basal body constitutes a major portion of the flagellar organelle and consists of four rings (L,P,S, and M) mounted on a central rod.

It localises to the cell outer membrane. Its subcellular location is the bacterial flagellum basal body. Its function is as follows. Assembles around the rod to form the L-ring and probably protects the motor/basal body from shearing forces during rotation. The chain is Flagellar L-ring protein from Campylobacter jejuni subsp. jejuni serotype O:6 (strain 81116 / NCTC 11828).